A 223-amino-acid chain; its full sequence is Translation initiation factor 6 (223 aa).

It belongs to the eIF-6 family.

Its function is as follows. Binds to the 50S ribosomal subunit and prevents its association with the 30S ribosomal subunit to form the 70S initiation complex. The protein is Translation initiation factor 6 of Sulfurisphaera tokodaii (strain DSM 16993 / JCM 10545 / NBRC 100140 / 7) (Sulfolobus tokodaii).